The following is an 89-amino-acid chain: Small ribosomal subunit protein uS15 (89 aa).

This sequence belongs to the universal ribosomal protein uS15 family. Part of the 30S ribosomal subunit. Forms a bridge to the 50S subunit in the 70S ribosome, contacting the 23S rRNA.

Functionally, one of the primary rRNA binding proteins, it binds directly to 16S rRNA where it helps nucleate assembly of the platform of the 30S subunit by binding and bridging several RNA helices of the 16S rRNA. Forms an intersubunit bridge (bridge B4) with the 23S rRNA of the 50S subunit in the ribosome. The sequence is that of Small ribosomal subunit protein uS15 from Chromobacterium violaceum (strain ATCC 12472 / DSM 30191 / JCM 1249 / CCUG 213 / NBRC 12614 / NCIMB 9131 / NCTC 9757 / MK).